Reading from the N-terminus, the 1416-residue chain is Gag-Pro-Pol polyprotein (1416 aa).

Glycine 2 is lipidated: N-myristoyl glycine; by host. Residues proline 100 to tyrosine 103 carry the PPXY motif motif. CCHC-type zinc fingers lie at residues glycine 345–threonine 362 and glycine 370–threonine 387. In terms of domain architecture, Peptidase A2 spans alanine 447–valine 525. The active-site Protease; shared with dimeric partner is the aspartate 452. Residues leucine 586–valine 776 enclose the Reverse transcriptase domain. 9 residues coordinate Mg(2+): aspartate 652, aspartate 727, aspartate 728, aspartate 1005, glutamate 1036, aspartate 1057, aspartate 1118, aspartate 1190, and aspartate 1247. In terms of domain architecture, RNase H type-1 spans isoleucine 996 to proline 1126. The Integrase catalytic domain occupies arginine 1179–glycine 1343. The segment at residues lysine 1352–cysteine 1400 is a DNA-binding region (integrase-type).

Belongs to the retroviral Pol polyprotein family. In terms of assembly, homodimer; the homodimers are part of the immature particles. Interacts with human TSG101 and NEDD4; these interactions are essential for budding and release of viral particles. As to quaternary structure, homodimer; further assembles as homohexamers. Requires Mg(2+) as cofactor. Phosphorylation of the matrix protein p15 by MAPK1 seems to play a role in budding. Post-translationally, myristoylated. Myristoylation of the matrix (MA) domain mediates the transport and binding of Gag polyproteins to the host plasma membrane and is required for the assembly of viral particles. In terms of processing, specific enzymatic cleavages by the viral protease yield mature proteins. The polyprotein is cleaved during and after budding, this process is termed maturation. The protease is autoproteolytically processed at its N- and C-termini.

The protein localises to the virion. The enzyme catalyses Endonucleolytic cleavage to 5'-phosphomonoester.. It carries out the reaction DNA(n) + a 2'-deoxyribonucleoside 5'-triphosphate = DNA(n+1) + diphosphate. Its function is as follows. The matrix domain targets Gag, Gag-Pro and Gag-Pro-Pol polyproteins to the plasma membrane via a multipartite membrane binding signal, that includes its myristoylated N-terminus. Matrix protein. In terms of biological role, forms the spherical core of the virus that encapsulates the genomic RNA-nucleocapsid complex. Functionally, binds strongly to viral nucleic acids and promote their aggregation. Also destabilizes the nucleic acids duplexes via highly structured zinc-binding motifs. Its function is as follows. The aspartyl protease mediates proteolytic cleavages of Gag and Gag-Pol polyproteins during or shortly after the release of the virion from the plasma membrane. Cleavages take place as an ordered, step-wise cascade to yield mature proteins. This process is called maturation. Displays maximal activity during the budding process just prior to particle release from the cell. RT is a multifunctional enzyme that converts the viral RNA genome into dsDNA in the cytoplasm, shortly after virus entry into the cell. This enzyme displays a DNA polymerase activity that can copy either DNA or RNA templates, and a ribonuclease H (RNase H) activity that cleaves the RNA strand of RNA-DNA heteroduplexes in a partially processive 3' to 5'-endonucleasic mode. Conversion of viral genomic RNA into dsDNA requires many steps. A tRNA-Pro binds to the primer-binding site (PBS) situated at the 5'-end of the viral RNA. RT uses the 3' end of the tRNA primer to perform a short round of RNA-dependent minus-strand DNA synthesis. The reading proceeds through the U5 region and ends after the repeated (R) region which is present at both ends of viral RNA. The portion of the RNA-DNA heteroduplex is digested by the RNase H, resulting in a ssDNA product attached to the tRNA primer. This ssDNA/tRNA hybridizes with the identical R region situated at the 3' end of viral RNA. This template exchange, known as minus-strand DNA strong stop transfer, can be either intra- or intermolecular. RT uses the 3' end of this newly synthesized short ssDNA to perform the RNA-dependent minus-strand DNA synthesis of the whole template. RNase H digests the RNA template except for a polypurine tract (PPT) situated at the 5' end of the genome. It is not clear if both polymerase and RNase H activities are simultaneous. RNase H probably can proceed both in a polymerase-dependent (RNA cut into small fragments by the same RT performing DNA synthesis) and a polymerase-independent mode (cleavage of remaining RNA fragments by free RTs). Secondly, RT performs DNA-directed plus-strand DNA synthesis using the PPT that has not been removed by RNase H as primer. PPT and tRNA primers are then removed by RNase H. The 3' and 5' ssDNA PBS regions hybridize to form a circular dsDNA intermediate. Strand displacement synthesis by RT to the PBS and PPT ends produces a blunt ended, linear dsDNA copy of the viral genome that includes long terminal repeats (LTRs) at both ends. In terms of biological role, catalyzes viral DNA integration into the host chromosome, by performing a series of DNA cutting and joining reactions. In Bos taurus (Bovine), this protein is Gag-Pro-Pol polyprotein (pol).